Consider the following 501-residue polypeptide: Glutamyl-tRNA(Gln) amidotransferase subunit A (501 aa).

Active-site charge relay system residues include Lys-80 and Ser-155. Ser-179 functions as the Acyl-ester intermediate in the catalytic mechanism.

It belongs to the amidase family. GatA subfamily. In terms of assembly, heterotrimer of A, B and C subunits.

The catalysed reaction is L-glutamyl-tRNA(Gln) + L-glutamine + ATP + H2O = L-glutaminyl-tRNA(Gln) + L-glutamate + ADP + phosphate + H(+). Functionally, allows the formation of correctly charged Gln-tRNA(Gln) through the transamidation of misacylated Glu-tRNA(Gln) in organisms which lack glutaminyl-tRNA synthetase. The reaction takes place in the presence of glutamine and ATP through an activated gamma-phospho-Glu-tRNA(Gln). In Cutibacterium acnes (strain DSM 16379 / KPA171202) (Propionibacterium acnes), this protein is Glutamyl-tRNA(Gln) amidotransferase subunit A.